We begin with the raw amino-acid sequence, 317 residues long: AT-hook motif nuclear-localized protein 22 (317 aa).

Disordered stretches follow at residues 22–41 and 48–106; these read HHQF…HDID and LKRD…KPPI. Over residues 26-35 the composition is skewed to low complexity; sequence QHQQQQQQQN. Positions 48–64 are enriched in basic and acidic residues; the sequence is LKRDRDADIDPNEHSSA. Positions 72 to 84 are enriched in gly residues; it reads GSGGESGGGGGGD. The segment at residues 89–101 is a DNA-binding region (a.T hook); that stretch reads RRPRGRPAGSKNK. One can recognise a PPC domain in the interval 113–253; it reads ANALKSHVME…EDDQEEQTAG (141 aa). The disordered stretch occupies residues 258–285; that stretch reads NIDGNATMGGGTQTQTQTQQQQQQQLMQ. Residues 270–282 show a composition bias toward low complexity; the sequence is QTQTQTQQQQQQQ.

As to quaternary structure, homodimer. Interacts with HDA1/HDA19, HDA6 and HDA9. In terms of tissue distribution, expressed at the hypocotyl-root transition zone and the root hair zone. Also detected in the inflorescence.

Its subcellular location is the nucleus. In terms of biological role, transcription factor that specifically binds AT-rich DNA sequences related to the nuclear matrix attachment regions (MARs). Binds an AT-rich DNA sequences in the FLOWERING LOCUS T (FT) promoter. Acts redundantly with AHL18, AHL27 and AHL29 in the regulation of flowering and regulation of the hypocotyl elongation. Plays a role in both photo- and skotomorphogenesis. Acts as a chromatin remodeling factor that modifies the architecture of FLOWERING LOCUS T (FT) chromatin by modulating both H3 acetylation and methylation leading to the regulation of FT expression during flowering induction. In Arabidopsis thaliana (Mouse-ear cress), this protein is AT-hook motif nuclear-localized protein 22.